A 139-amino-acid polypeptide reads, in one-letter code: MRLTQGAFSYLPDLTDAQIIKQIDYCLSRGWSVGVEWTDDPHPRNAYWELWGLPLFDVKDSSAILYEVNECRRLNPEGYIKLVAFNAARGTESSASAFIVQRPKSEPGFYLERTEAEGRMIRYTIHSYAVARNPEGSRY.

This sequence belongs to the RuBisCO small chain family. In terms of assembly, heterohexadecamer of 8 large and 8 small subunits.

It is found in the plastid. It localises to the chloroplast. Its function is as follows. RuBisCO catalyzes two reactions: the carboxylation of D-ribulose 1,5-bisphosphate, the primary event in carbon dioxide fixation, as well as the oxidative fragmentation of the pentose substrate in the photorespiration process. Both reactions occur simultaneously and in competition at the same active site. Although the small subunit is not catalytic it is essential for maximal activity. This is Ribulose bisphosphate carboxylase small subunit from Olisthodiscus luteus (Marine phytoflagellate).